The sequence spans 186 residues: Acetyltransferase PA5475 (186 aa).

One can recognise an N-acetyltransferase domain in the interval 31–186 (VLIRPLREED…STQVIHRLAL (156 aa)). CoA-binding positions include 117–119 (VTI), Gly125, Asn156, and 161–163 (DLC).

In terms of biological role, catalyzes the transfer of an acetyl group from acetyl coenzyme A (AcCoA) to an acceptor substrate and releases both CoA and the acetylated product. It prefers the antibiotic chloramphenicol. This chain is Acetyltransferase PA5475, found in Pseudomonas aeruginosa (strain ATCC 15692 / DSM 22644 / CIP 104116 / JCM 14847 / LMG 12228 / 1C / PRS 101 / PAO1).